Reading from the N-terminus, the 257-residue chain is Trans-aconitate 2-methyltransferase (257 aa).

The protein belongs to the methyltransferase superfamily. Tam family.

The protein resides in the cytoplasm. The catalysed reaction is trans-aconitate + S-adenosyl-L-methionine = (E)-3-(methoxycarbonyl)pent-2-enedioate + S-adenosyl-L-homocysteine. Its function is as follows. Catalyzes the S-adenosylmethionine monomethyl esterification of trans-aconitate. The sequence is that of Trans-aconitate 2-methyltransferase from Rhizobium meliloti (strain 1021) (Ensifer meliloti).